Consider the following 156-residue polypeptide: Cyclic pyranopterin monophosphate synthase (156 aa).

Substrate is bound by residues Leu75–His77 and Met111–Glu112. Residue Asp126 is part of the active site.

Belongs to the MoaC family. Homohexamer; trimer of dimers.

The catalysed reaction is (8S)-3',8-cyclo-7,8-dihydroguanosine 5'-triphosphate = cyclic pyranopterin phosphate + diphosphate. It participates in cofactor biosynthesis; molybdopterin biosynthesis. Catalyzes the conversion of (8S)-3',8-cyclo-7,8-dihydroguanosine 5'-triphosphate to cyclic pyranopterin monophosphate (cPMP). This is Cyclic pyranopterin monophosphate synthase from Corynebacterium glutamicum (strain R).